A 417-amino-acid polypeptide reads, in one-letter code: NADH-quinone oxidoreductase subunit D (417 aa).

The protein belongs to the complex I 49 kDa subunit family. In terms of assembly, NDH-1 is composed of 14 different subunits. Subunits NuoB, C, D, E, F, and G constitute the peripheral sector of the complex.

It localises to the cell inner membrane. It carries out the reaction a quinone + NADH + 5 H(+)(in) = a quinol + NAD(+) + 4 H(+)(out). Its function is as follows. NDH-1 shuttles electrons from NADH, via FMN and iron-sulfur (Fe-S) centers, to quinones in the respiratory chain. The immediate electron acceptor for the enzyme in this species is believed to be ubiquinone. Couples the redox reaction to proton translocation (for every two electrons transferred, four hydrogen ions are translocated across the cytoplasmic membrane), and thus conserves the redox energy in a proton gradient. In Azoarcus sp. (strain BH72), this protein is NADH-quinone oxidoreductase subunit D.